Here is a 318-residue protein sequence, read N- to C-terminus: Dihydroorotate dehydrogenase B (NAD(+)), catalytic subunit (318 aa).

FMN contacts are provided by residues S19 and 43-44 (KT). Residues K43, 69–73 (NAMGL), and N125 contribute to the substrate site. Residue N125 coordinates FMN. C128 functions as the Nucleophile in the catalytic mechanism. K164 and V192 together coordinate FMN. 193–194 (NT) serves as a coordination point for substrate. Residues G219, 247–248 (GG), and 269–270 (AT) each bind FMN.

This sequence belongs to the dihydroorotate dehydrogenase family. Type 1 subfamily. In terms of assembly, heterotetramer of 2 PyrK and 2 PyrD type B subunits. The cofactor is FMN.

Its subcellular location is the cytoplasm. It catalyses the reaction (S)-dihydroorotate + NAD(+) = orotate + NADH + H(+). Its pathway is pyrimidine metabolism; UMP biosynthesis via de novo pathway; orotate from (S)-dihydroorotate (NAD(+) route): step 1/1. Catalyzes the conversion of dihydroorotate to orotate with NAD(+) as electron acceptor. This is Dihydroorotate dehydrogenase B (NAD(+)), catalytic subunit (pyrD) from Methanopyrus kandleri (strain AV19 / DSM 6324 / JCM 9639 / NBRC 100938).